We begin with the raw amino-acid sequence, 152 residues long: Ribosome maturation factor RimP (152 aa).

This sequence belongs to the RimP family.

The protein localises to the cytoplasm. Its function is as follows. Required for maturation of 30S ribosomal subunits. This is Ribosome maturation factor RimP from Idiomarina loihiensis (strain ATCC BAA-735 / DSM 15497 / L2-TR).